The primary structure comprises 445 residues: 3-phosphoshikimate 1-carboxyvinyltransferase (445 aa).

A compositionally biased stretch (polar residues) spans 1-20; sequence MSSTHPGRTIRSGATQNLSG. The segment at 1-24 is disordered; sequence MSSTHPGRTIRSGATQNLSGTIRP. 3-phosphoshikimate contacts are provided by lysine 28, serine 29, and arginine 33. Position 28 (lysine 28) interacts with phosphoenolpyruvate. Residues glycine 101 and arginine 129 each contribute to the phosphoenolpyruvate site. 4 residues coordinate 3-phosphoshikimate: serine 174, glutamine 176, aspartate 322, and lysine 349. Residue glutamine 176 coordinates phosphoenolpyruvate. The active-site Proton acceptor is the aspartate 322. Phosphoenolpyruvate is bound by residues arginine 353 and arginine 397.

This sequence belongs to the EPSP synthase family. Monomer.

It is found in the cytoplasm. It carries out the reaction 3-phosphoshikimate + phosphoenolpyruvate = 5-O-(1-carboxyvinyl)-3-phosphoshikimate + phosphate. It participates in metabolic intermediate biosynthesis; chorismate biosynthesis; chorismate from D-erythrose 4-phosphate and phosphoenolpyruvate: step 6/7. In terms of biological role, catalyzes the transfer of the enolpyruvyl moiety of phosphoenolpyruvate (PEP) to the 5-hydroxyl of shikimate-3-phosphate (S3P) to produce enolpyruvyl shikimate-3-phosphate and inorganic phosphate. The protein is 3-phosphoshikimate 1-carboxyvinyltransferase of Magnetococcus marinus (strain ATCC BAA-1437 / JCM 17883 / MC-1).